Consider the following 114-residue polypeptide: UPF0342 protein SSP0954 (114 aa).

Belongs to the UPF0342 family.

The protein is UPF0342 protein SSP0954 of Staphylococcus saprophyticus subsp. saprophyticus (strain ATCC 15305 / DSM 20229 / NCIMB 8711 / NCTC 7292 / S-41).